Reading from the N-terminus, the 120-residue chain is NAD(P)H-quinone oxidoreductase subunit 3 (120 aa).

3 helical membrane-spanning segments follow: residues 6–26 (GYDAFLGFLLISAAVPVLALV), 64–84 (MFALVFVIFDVETVFLYPWAV), and 89–109 (LGLLAFIEALIFIAILIVALA).

The protein belongs to the complex I subunit 3 family. NDH-1 can be composed of about 15 different subunits; different subcomplexes with different compositions have been identified which probably have different functions.

The protein resides in the cellular thylakoid membrane. It catalyses the reaction a plastoquinone + NADH + (n+1) H(+)(in) = a plastoquinol + NAD(+) + n H(+)(out). The enzyme catalyses a plastoquinone + NADPH + (n+1) H(+)(in) = a plastoquinol + NADP(+) + n H(+)(out). Functionally, NDH-1 shuttles electrons from an unknown electron donor, via FMN and iron-sulfur (Fe-S) centers, to quinones in the respiratory and/or the photosynthetic chain. The immediate electron acceptor for the enzyme in this species is believed to be plastoquinone. Couples the redox reaction to proton translocation, and thus conserves the redox energy in a proton gradient. Cyanobacterial NDH-1 also plays a role in inorganic carbon-concentration. The sequence is that of NAD(P)H-quinone oxidoreductase subunit 3 from Prochlorococcus marinus (strain MIT 9211).